We begin with the raw amino-acid sequence, 726 residues long: Peroxisomal fatty acid beta-oxidation multifunctional protein (726 aa).

The protein in the N-terminal section; belongs to the enoyl-CoA hydratase/isomerase family. This sequence in the central section; belongs to the 3-hydroxyacyl-CoA dehydrogenase family. As to quaternary structure, monomer.

The protein localises to the peroxisome. The protein resides in the cytoplasm. Its subcellular location is the cytoskeleton. The enzyme catalyses a (3S)-3-hydroxyacyl-CoA = a (2E)-enoyl-CoA + H2O. It carries out the reaction a 4-saturated-(3S)-3-hydroxyacyl-CoA = a (3E)-enoyl-CoA + H2O. The catalysed reaction is a (3Z)-enoyl-CoA = a 4-saturated (2E)-enoyl-CoA. It catalyses the reaction a (3E)-enoyl-CoA = a 4-saturated (2E)-enoyl-CoA. The enzyme catalyses (3S)-3-hydroxybutanoyl-CoA = (3R)-3-hydroxybutanoyl-CoA. It carries out the reaction a (3S)-3-hydroxyacyl-CoA + NAD(+) = a 3-oxoacyl-CoA + NADH + H(+). The protein operates within lipid metabolism; fatty acid beta-oxidation. Multifunctional enzyme involved in fatty acid beta-oxidation. Also binds to RNA and microtubules. Possible role in subcellular mRNA localization and RNA-cytoskeleton interactions. The chain is Peroxisomal fatty acid beta-oxidation multifunctional protein (MFP) from Oryza sativa subsp. japonica (Rice).